The primary structure comprises 275 residues: MVKRMHCNINLKYGVIMKKDCYTLRISLKPGFINAEQLKAIAYVIENFGDNKAHITTRQGIEFKISPEHLEEVEKILNNVGLNLGSTGNRVRQVVSCIGLECYNAIGDSVSLARRIHEEFEGVWVPRKVKINVSGCPNSCTFHRFCDIGICYRYKITINKEICTNCGKCKDFCDLNAIDWERKIIKDNCTGEGKCTGLCNAFKAERVISIFVGGKGGRIYKEGKHLIDLKNEDDVLFVIDELISLYAKFGKGRMADFVENYGIENLRNNIKELIK.

[4Fe-4S] cluster-binding residues include cysteine 97, cysteine 102, cysteine 136, and cysteine 140. A siroheme-binding site is contributed by cysteine 140.

The protein belongs to the nitrite and sulfite reductase 4Fe-4S domain family.

This is an uncharacterized protein from Methanocaldococcus jannaschii (strain ATCC 43067 / DSM 2661 / JAL-1 / JCM 10045 / NBRC 100440) (Methanococcus jannaschii).